Here is a 275-residue protein sequence, read N- to C-terminus: Uronate dehydrogenase (275 aa).

NAD(+)-binding positions include 22-23 (GL), 42-44 (DIA), 60-61 (DL), and 80-84 (FGGVS). Substrate contacts are provided by residues serine 84 and 120-122 (SNH). Tyrosine 145 acts as the Proton acceptor in catalysis. Lysine 149 is an NAD(+) binding site. Residue serine 174 coordinates substrate. Serine 175 is an NAD(+) binding site. Arginine 183 contacts substrate.

This sequence belongs to the NAD(P)-dependent epimerase/dehydratase family. Homohexamer.

It catalyses the reaction beta-D-galacturonate + NAD(+) = D-galactaro-1,5-lactone + NADH + H(+). The catalysed reaction is beta-D-glucuronate + NAD(+) = D-glucaro-1,5-lactone + NADH + H(+). It participates in carbohydrate acid metabolism; D-galacturonate degradation via prokaryotic oxidative pathway. Functionally, catalyzes the oxidation of beta-D-galacturonate and beta-D-glucuronate to galactarate and D-glucarate, respectively. Cannot use NADP(+) instead of NAD(+) as cosubstrate. The sequence is that of Uronate dehydrogenase (udh) from Pseudomonas syringae pv. tomato (strain ATCC BAA-871 / DC3000).